A 130-amino-acid chain; its full sequence is Ribosome biogenesis inhibitor MINAS-60 (130 aa).

Residues 61–130 (SKVQRIPTRP…RRRRPVTSSC (70 aa)) form a disordered region. A compositionally biased stretch (basic residues) spans 109-130 (KGRRRRRRMRRRRRRRPVTSSC).

Interacts with 60S ribosome assembly factors GTPBP4 and MRTO4.

It is found in the nucleus. The protein resides in the nucleolus. Functionally, acts as a late-stage inhibitor of pre-60S ribosome assembly by preventing pre-60S ribosome export from nucleus. The protein is Ribosome biogenesis inhibitor MINAS-60 of Mus musculus (Mouse).